The sequence spans 524 residues: Cytochrome P450 monooxygenase ATR4 (524 aa).

Residues 13-36 form a helical membrane-spanning segment; it reads IITYLDSLTWVGMALPLFSLCWAI. N-linked (GlcNAc...) asparagine glycosylation is found at asparagine 291, asparagine 444, and asparagine 454.

It belongs to the cytochrome P450 family. Requires heme as cofactor.

The protein resides in the membrane. It participates in mycotoxin biosynthesis. Its function is as follows. Cytochrome P450 monooxygenase; part of the core atranone cluster (CAC) which products are predicted to catalyze most or all steps of mycotoxin atranone synthesis, starting from geranylgeranyl pyrophosphate (GGPP). The initial cyclization of GGPP to dolabellane is probably performed by the terpene cyclase ATR13. The Baeyer-Villiger oxidation near the end of the atranone synthesis, which converts atranones D and E to atranones F and G is predicted to be catalyzed by the monooxygenase ATR8. Of the CAC's other predicted gene products, the reducing PKS ATR6 might synthesize a polyketide chain. This polyketide is probably transferred onto the atranone backbone by the polyketide transferase ATR5. Other predicted CAC products include 4 oxygenases (ATR2, ATR3, ATR4, and ATR14), 3 short-chain reductases (ATR7, ATR9, and ATR10), and a methyltransferase (ATR12). These may all be involved in the various steps of atranone biosynthesis, although their specific roles must await experimental determination. The chain is Cytochrome P450 monooxygenase ATR4 from Stachybotrys chlorohalonatus (strain IBT 40285).